We begin with the raw amino-acid sequence, 198 residues long: N-acetyltransferase 9-like protein (198 aa).

The region spanning 14–186 (IILVPYKEKH…SNNFTNLTAD (173 aa)) is the N-acetyltransferase domain.

The protein belongs to the acetyltransferase family. GNAT subfamily.

The chain is N-acetyltransferase 9-like protein (nat9) from Nematostella vectensis (Starlet sea anemone).